A 172-amino-acid polypeptide reads, in one-letter code: Crossover junction endodeoxyribonuclease RuvC (172 aa).

Active-site residues include D7, E68, and D141. D7, E68, and D141 together coordinate Mg(2+).

This sequence belongs to the RuvC family. Homodimer which binds Holliday junction (HJ) DNA. The HJ becomes 2-fold symmetrical on binding to RuvC with unstacked arms; it has a different conformation from HJ DNA in complex with RuvA. In the full resolvosome a probable DNA-RuvA(4)-RuvB(12)-RuvC(2) complex forms which resolves the HJ. Mg(2+) is required as a cofactor.

The protein localises to the cytoplasm. It catalyses the reaction Endonucleolytic cleavage at a junction such as a reciprocal single-stranded crossover between two homologous DNA duplexes (Holliday junction).. In terms of biological role, the RuvA-RuvB-RuvC complex processes Holliday junction (HJ) DNA during genetic recombination and DNA repair. Endonuclease that resolves HJ intermediates. Cleaves cruciform DNA by making single-stranded nicks across the HJ at symmetrical positions within the homologous arms, yielding a 5'-phosphate and a 3'-hydroxyl group; requires a central core of homology in the junction. The consensus cleavage sequence is 5'-(A/T)TT(C/G)-3'. Cleavage occurs on the 3'-side of the TT dinucleotide at the point of strand exchange. HJ branch migration catalyzed by RuvA-RuvB allows RuvC to scan DNA until it finds its consensus sequence, where it cleaves and resolves the cruciform DNA. This Frankia casuarinae (strain DSM 45818 / CECT 9043 / HFP020203 / CcI3) protein is Crossover junction endodeoxyribonuclease RuvC.